A 181-amino-acid chain; its full sequence is Protein GrpE (181 aa).

A compositionally biased stretch (polar residues) spans methionine 1–alanine 13. Positions methionine 1–glutamate 39 are disordered. The segment covering glutamine 21–glutamate 39 has biased composition (low complexity).

This sequence belongs to the GrpE family. Homodimer.

It is found in the cytoplasm. Its function is as follows. Participates actively in the response to hyperosmotic and heat shock by preventing the aggregation of stress-denatured proteins, in association with DnaK and GrpE. It is the nucleotide exchange factor for DnaK and may function as a thermosensor. Unfolded proteins bind initially to DnaJ; upon interaction with the DnaJ-bound protein, DnaK hydrolyzes its bound ATP, resulting in the formation of a stable complex. GrpE releases ADP from DnaK; ATP binding to DnaK triggers the release of the substrate protein, thus completing the reaction cycle. Several rounds of ATP-dependent interactions between DnaJ, DnaK and GrpE are required for fully efficient folding. This chain is Protein GrpE, found in Burkholderia lata (strain ATCC 17760 / DSM 23089 / LMG 22485 / NCIMB 9086 / R18194 / 383).